Consider the following 428-residue polypeptide: Serine--tRNA ligase (428 aa).

Residue 235–237 (TAE) participates in L-serine binding. Position 266–268 (266–268 (RSE)) interacts with ATP. E289 serves as a coordination point for L-serine. 353-356 (EISS) is an ATP binding site. Position 389 (S389) interacts with L-serine.

It belongs to the class-II aminoacyl-tRNA synthetase family. Type-1 seryl-tRNA synthetase subfamily. Homodimer. The tRNA molecule binds across the dimer.

Its subcellular location is the cytoplasm. The catalysed reaction is tRNA(Ser) + L-serine + ATP = L-seryl-tRNA(Ser) + AMP + diphosphate + H(+). The enzyme catalyses tRNA(Sec) + L-serine + ATP = L-seryl-tRNA(Sec) + AMP + diphosphate + H(+). It functions in the pathway aminoacyl-tRNA biosynthesis; selenocysteinyl-tRNA(Sec) biosynthesis; L-seryl-tRNA(Sec) from L-serine and tRNA(Sec): step 1/1. Catalyzes the attachment of serine to tRNA(Ser). Is also able to aminoacylate tRNA(Sec) with serine, to form the misacylated tRNA L-seryl-tRNA(Sec), which will be further converted into selenocysteinyl-tRNA(Sec). This is Serine--tRNA ligase from Shewanella baltica (strain OS185).